The following is a 186-amino-acid chain: Potassium-transporting ATPase KdpC subunit (186 aa).

A helical transmembrane segment spans residues 10 to 30; that stretch reads LTIITMVLCGFLFPLAITLIG.

This sequence belongs to the KdpC family. As to quaternary structure, the system is composed of three essential subunits: KdpA, KdpB and KdpC.

It is found in the cell membrane. In terms of biological role, part of the high-affinity ATP-driven potassium transport (or Kdp) system, which catalyzes the hydrolysis of ATP coupled with the electrogenic transport of potassium into the cytoplasm. This subunit acts as a catalytic chaperone that increases the ATP-binding affinity of the ATP-hydrolyzing subunit KdpB by the formation of a transient KdpB/KdpC/ATP ternary complex. In Staphylococcus aureus (strain MRSA252), this protein is Potassium-transporting ATPase KdpC subunit.